A 216-amino-acid chain; its full sequence is Protein-L-isoaspartate O-methyltransferase 1 (216 aa).

Residue Ser60 is part of the active site.

Belongs to the methyltransferase superfamily. L-isoaspartyl/D-aspartyl protein methyltransferase family.

It is found in the cytoplasm. It carries out the reaction [protein]-L-isoaspartate + S-adenosyl-L-methionine = [protein]-L-isoaspartate alpha-methyl ester + S-adenosyl-L-homocysteine. Functionally, catalyzes the methyl esterification of L-isoaspartyl residues in peptides and proteins that result from spontaneous decomposition of normal L-aspartyl and L-asparaginyl residues. It plays a role in the repair and/or degradation of damaged proteins. This is Protein-L-isoaspartate O-methyltransferase 1 (pcm1) from Archaeoglobus fulgidus (strain ATCC 49558 / DSM 4304 / JCM 9628 / NBRC 100126 / VC-16).